Reading from the N-terminus, the 251-residue chain is Aspartate/glutamate leucyltransferase (251 aa).

Belongs to the R-transferase family. Bpt subfamily.

The protein localises to the cytoplasm. The enzyme catalyses N-terminal L-glutamyl-[protein] + L-leucyl-tRNA(Leu) = N-terminal L-leucyl-L-glutamyl-[protein] + tRNA(Leu) + H(+). It catalyses the reaction N-terminal L-aspartyl-[protein] + L-leucyl-tRNA(Leu) = N-terminal L-leucyl-L-aspartyl-[protein] + tRNA(Leu) + H(+). Functionally, functions in the N-end rule pathway of protein degradation where it conjugates Leu from its aminoacyl-tRNA to the N-termini of proteins containing an N-terminal aspartate or glutamate. The polypeptide is Aspartate/glutamate leucyltransferase (Stenotrophomonas maltophilia (strain K279a)).